Reading from the N-terminus, the 547-residue chain is 2-succinyl-5-enolpyruvyl-6-hydroxy-3-cyclohexene-1-carboxylate synthase (547 aa).

Belongs to the TPP enzyme family. MenD subfamily. In terms of assembly, homodimer. Mg(2+) is required as a cofactor. Mn(2+) serves as cofactor. The cofactor is thiamine diphosphate.

It catalyses the reaction isochorismate + 2-oxoglutarate + H(+) = 5-enolpyruvoyl-6-hydroxy-2-succinyl-cyclohex-3-ene-1-carboxylate + CO2. Its pathway is quinol/quinone metabolism; 1,4-dihydroxy-2-naphthoate biosynthesis; 1,4-dihydroxy-2-naphthoate from chorismate: step 2/7. The protein operates within quinol/quinone metabolism; menaquinone biosynthesis. Its function is as follows. Catalyzes the thiamine diphosphate-dependent decarboxylation of 2-oxoglutarate and the subsequent addition of the resulting succinic semialdehyde-thiamine pyrophosphate anion to isochorismate to yield 2-succinyl-5-enolpyruvyl-6-hydroxy-3-cyclohexene-1-carboxylate (SEPHCHC). The chain is 2-succinyl-5-enolpyruvyl-6-hydroxy-3-cyclohexene-1-carboxylate synthase from Mycobacterium sp. (strain KMS).